We begin with the raw amino-acid sequence, 307 residues long: NAD kinase 1 (307 aa).

Catalysis depends on Asp-67, which acts as the Proton acceptor. NAD(+)-binding positions include 67-68 (DG), 149-150 (NE), Arg-160, Asp-181, and 192-197 (TCYTSS).

Belongs to the NAD kinase family. A divalent metal cation serves as cofactor.

It localises to the cytoplasm. It catalyses the reaction NAD(+) + ATP = ADP + NADP(+) + H(+). Involved in the regulation of the intracellular balance of NAD and NADP, and is a key enzyme in the biosynthesis of NADP. Catalyzes specifically the phosphorylation on 2'-hydroxyl of the adenosine moiety of NAD to yield NADP. Essential for photoheterotrophic growth. Has a significant function in the oxidative pentose phosphate (OPP) pathway for glucose catabolism under photoheterotrophic conditions. Is also involved in cellular redox homeostasis. The protein is NAD kinase 1 of Synechocystis sp. (strain ATCC 27184 / PCC 6803 / Kazusa).